Reading from the N-terminus, the 255-residue chain is Aliphatic sulfonates import ATP-binding protein SsuB (255 aa).

One can recognise an ABC transporter domain in the interval 12 to 233 (LLLNAVSKHY…RLGSVRLAEL (222 aa)). Residue 44-51 (GRSGGGKS) participates in ATP binding.

This sequence belongs to the ABC transporter superfamily. Aliphatic sulfonates importer (TC 3.A.1.17.2) family. As to quaternary structure, the complex is composed of two ATP-binding proteins (SsuB), two transmembrane proteins (SsuC) and a solute-binding protein (SsuA).

The protein localises to the cell inner membrane. The catalysed reaction is ATP + H2O + aliphatic sulfonate-[sulfonate-binding protein]Side 1 = ADP + phosphate + aliphatic sulfonateSide 2 + [sulfonate-binding protein]Side 1.. Functionally, part of the ABC transporter complex SsuABC involved in aliphatic sulfonates import. Responsible for energy coupling to the transport system. The chain is Aliphatic sulfonates import ATP-binding protein SsuB from Escherichia coli O6:K15:H31 (strain 536 / UPEC).